The sequence spans 806 residues: Phenylalanine--tRNA ligase beta subunit (806 aa).

Positions 39–154 (SAGLKKIVVG…EAIAPGTDVY (116 aa)) constitute a tRNA-binding domain. The region spanning 410–485 (PQPKVIQFDS…RLYGYDNLPS (76 aa)) is the B5 domain. Mg(2+)-binding residues include Asp-463, Asp-469, Glu-472, and Glu-473. The region spanning 713 to 806 (PKFPEVTRDI…LVATFQAKVR (94 aa)) is the FDX-ACB domain.

Belongs to the phenylalanyl-tRNA synthetase beta subunit family. Type 1 subfamily. Tetramer of two alpha and two beta subunits. It depends on Mg(2+) as a cofactor.

It is found in the cytoplasm. It carries out the reaction tRNA(Phe) + L-phenylalanine + ATP = L-phenylalanyl-tRNA(Phe) + AMP + diphosphate + H(+). This Latilactobacillus sakei subsp. sakei (strain 23K) (Lactobacillus sakei subsp. sakei) protein is Phenylalanine--tRNA ligase beta subunit.